A 593-amino-acid chain; its full sequence is V-type sodium ATPase catalytic subunit A (593 aa).

232–239 provides a ligand contact to ATP; sequence GPFGAGKT.

It belongs to the ATPase alpha/beta chains family.

The catalysed reaction is 4 Na(+)(in) + ATP + H2O = 4 Na(+)(out) + ADP + phosphate + H(+). Functionally, involved in ATP-driven sodium extrusion. In Enterococcus hirae (strain ATCC 9790 / DSM 20160 / JCM 8729 / LMG 6399 / NBRC 3181 / NCIMB 6459 / NCDO 1258 / NCTC 12367 / WDCM 00089 / R), this protein is V-type sodium ATPase catalytic subunit A (ntpA).